A 394-amino-acid polypeptide reads, in one-letter code: NAD(P)H-quinone oxidoreductase subunit H (394 aa).

This sequence belongs to the complex I 49 kDa subunit family. NDH-1 can be composed of about 15 different subunits; different subcomplexes with different compositions have been identified which probably have different functions.

The protein localises to the cellular thylakoid membrane. It catalyses the reaction a plastoquinone + NADH + (n+1) H(+)(in) = a plastoquinol + NAD(+) + n H(+)(out). The catalysed reaction is a plastoquinone + NADPH + (n+1) H(+)(in) = a plastoquinol + NADP(+) + n H(+)(out). In terms of biological role, NDH-1 shuttles electrons from an unknown electron donor, via FMN and iron-sulfur (Fe-S) centers, to quinones in the respiratory and/or the photosynthetic chain. The immediate electron acceptor for the enzyme in this species is believed to be plastoquinone. Couples the redox reaction to proton translocation, and thus conserves the redox energy in a proton gradient. Cyanobacterial NDH-1 also plays a role in inorganic carbon-concentration. The polypeptide is NAD(P)H-quinone oxidoreductase subunit H (Prochlorococcus marinus (strain MIT 9211)).